A 213-amino-acid chain; its full sequence is 3-isopropylmalate dehydratase small subunit (213 aa).

The protein belongs to the LeuD family. LeuD type 1 subfamily. Heterodimer of LeuC and LeuD.

The catalysed reaction is (2R,3S)-3-isopropylmalate = (2S)-2-isopropylmalate. It participates in amino-acid biosynthesis; L-leucine biosynthesis; L-leucine from 3-methyl-2-oxobutanoate: step 2/4. In terms of biological role, catalyzes the isomerization between 2-isopropylmalate and 3-isopropylmalate, via the formation of 2-isopropylmaleate. The protein is 3-isopropylmalate dehydratase small subunit of Aromatoleum aromaticum (strain DSM 19018 / LMG 30748 / EbN1) (Azoarcus sp. (strain EbN1)).